A 212-amino-acid chain; its full sequence is MSPENDIRLEAGRKLFAGAVNFLKSAPALEFLPAPTAPEVAFAGRSNVGKSSLINALTNRNSLARASTTPGRTQELNFFDVGEPLQMRLVDMPGYGFAKAPKDVVKRWKWLINDYLRGRAVLRRSLILIDSRHGIKDVDRDLMKMLDDAAISYRVVLTKSDKIKAVELEKTVKAITEEMRKHPAAFPEIIATSSEKGTGIAELRAAVYDAII.

An EngB-type G domain is found at 36–212 (TAPEVAFAGR…LRAAVYDAII (177 aa)). GTP-binding positions include 44 to 51 (GRSNVGKS), 71 to 75 (GRTQE), 91 to 94 (DMPG), 158 to 161 (TKSD), and 192 to 194 (TSS). S51 and T73 together coordinate Mg(2+).

The protein belongs to the TRAFAC class TrmE-Era-EngA-EngB-Septin-like GTPase superfamily. EngB GTPase family. It depends on Mg(2+) as a cofactor.

Its function is as follows. Necessary for normal cell division and for the maintenance of normal septation. This is GTP-binding protein EngB from Zymomonas mobilis subsp. mobilis (strain ATCC 31821 / ZM4 / CP4).